A 392-amino-acid chain; its full sequence is GDSL esterase/lipase ESM1 (392 aa).

The first 28 residues, 1–28, serve as a signal peptide directing secretion; it reads MADNLNLVSVLGVLLVLTIFHNPIIVYA. S43 serves as the catalytic Nucleophile. N146, N166, and N290 each carry an N-linked (GlcNAc...) asparagine glycan. Catalysis depends on residues D324 and H327.

The protein belongs to the 'GDSL' lipolytic enzyme family.

Its subcellular location is the secreted. Functionally, represses or inhibits nitriles production from methionine-derived and from indol-3-ylmethyl glucosinolates. Favors isothiocyanate production. This Arabidopsis thaliana (Mouse-ear cress) protein is GDSL esterase/lipase ESM1 (ESM1).